The following is a 127-amino-acid chain: Ribosome-binding factor A (127 aa).

The protein belongs to the RbfA family. Monomer. Binds 30S ribosomal subunits, but not 50S ribosomal subunits or 70S ribosomes.

The protein resides in the cytoplasm. In terms of biological role, one of several proteins that assist in the late maturation steps of the functional core of the 30S ribosomal subunit. Associates with free 30S ribosomal subunits (but not with 30S subunits that are part of 70S ribosomes or polysomes). Required for efficient processing of 16S rRNA. May interact with the 5'-terminal helix region of 16S rRNA. The polypeptide is Ribosome-binding factor A (Stenotrophomonas maltophilia (strain R551-3)).